A 449-amino-acid polypeptide reads, in one-letter code: MASLQQSRRLVTEIPGPASQALTHRRAAAVSSGVGVTLPVFVARAGGGIVEDVDGNRLIDLGSGIAVTTIGNSSPRVVDAVRTQVAEFTHTCFMVTPYEGYVAVAEQLNRITPGSGPKRSVLFNSGAEAVENAVKIARSYTGKPAVVAFDHAYHGRTNLTMALTAKSMPYKSGFGPFAPEIYRAPLSYPYRDGLLDKQLATNGELAAARAIGVIDKQVGANNLAALVIEPIQGEGGFIVPAEGFLPALLDWCRKNHVVFIADEVQTGFARTGAMFACEHEGPDGLEPDLICTAKGIADGLPLSAVTGRAEIMNAPHVGGLGGTFGGNPVACAAALATIATIESDGLIERARQIERLVTDRLTTLQAVDDRIGDVRGRGAMIAVELVKSGTTEPDAGLTERLATAAHAAGVIILTCGMFGNIIRLLPPLTIGDELLSEGLDIVCAILADL.

At K294 the chain carries N6-(pyridoxal phosphate)lysine.

It belongs to the class-III pyridoxal-phosphate-dependent aminotransferase family. The cofactor is pyridoxal 5'-phosphate.

It carries out the reaction 4-aminobutanoate + 2-oxoglutarate = succinate semialdehyde + L-glutamate. The catalysed reaction is (S)-3-amino-2-methylpropanoate + 2-oxoglutarate = 2-methyl-3-oxopropanoate + L-glutamate. Its pathway is amino-acid degradation; 4-aminobutanoate degradation. The polypeptide is 4-aminobutyrate aminotransferase (gabT) (Mycobacterium bovis (strain ATCC BAA-935 / AF2122/97)).